Reading from the N-terminus, the 416-residue chain is Isobutyryl-CoA dehydrogenase, mitochondrial (416 aa).

The N-terminal 23 residues, methionine 1 to glycine 23, are a transit peptide targeting the mitochondrion. Lysine 51 carries the post-translational modification N6-acetyllysine; alternate. Lysine 51 carries the N6-succinyllysine; alternate modification. FAD is bound by residues tyrosine 159–serine 168 and phenylalanine 192–serine 194. A substrate-binding site is contributed by serine 168. Lysine 232 is subject to N6-acetyllysine. Residue lysine 272 is modified to N6-succinyllysine. Asparagine 275–arginine 278 serves as a coordination point for substrate. Residues arginine 303, serine 313 to glutamine 314, and glutamine 372 to glycine 376 each bind FAD. Residue glutamate 399 is the Proton acceptor of the active site. Serine 401–glutamate 403 is an FAD binding site. Arginine 411 provides a ligand contact to substrate.

Belongs to the acyl-CoA dehydrogenase family. Homotetramer, formed by a dimer of dimers. Requires FAD as cofactor.

It localises to the mitochondrion. The enzyme catalyses 2-methylpropanoyl-CoA + oxidized [electron-transfer flavoprotein] + H(+) = 2-methylpropenoyl-CoA + reduced [electron-transfer flavoprotein]. It carries out the reaction (2S)-2-methylbutanoyl-CoA + oxidized [electron-transfer flavoprotein] + H(+) = (2E)-2-methylbut-2-enoyl-CoA + reduced [electron-transfer flavoprotein]. It catalyses the reaction propanoyl-CoA + oxidized [electron-transfer flavoprotein] + H(+) = acryloyl-CoA + reduced [electron-transfer flavoprotein]. The protein operates within amino-acid degradation; L-valine degradation. Functionally, isobutyryl-CoA dehydrogenase which catalyzes the conversion of 2-methylpropanoyl-CoA to (2E)-2-methylpropenoyl-CoA in the valine catabolic pathway. To a lesser extent, also able to catalyze the oxidation of (2S)-2-methylbutanoyl-CoA. The sequence is that of Isobutyryl-CoA dehydrogenase, mitochondrial (ACAD8) from Bos taurus (Bovine).